The sequence spans 209 residues: Probable nicotinate-nucleotide adenylyltransferase (209 aa).

This sequence belongs to the NadD family.

It carries out the reaction nicotinate beta-D-ribonucleotide + ATP + H(+) = deamido-NAD(+) + diphosphate. Its pathway is cofactor biosynthesis; NAD(+) biosynthesis; deamido-NAD(+) from nicotinate D-ribonucleotide: step 1/1. Its function is as follows. Catalyzes the reversible adenylation of nicotinate mononucleotide (NaMN) to nicotinic acid adenine dinucleotide (NaAD). This Shewanella woodyi (strain ATCC 51908 / MS32) protein is Probable nicotinate-nucleotide adenylyltransferase.